Here is a 378-residue protein sequence, read N- to C-terminus: Putative glutamate--cysteine ligase 2 (378 aa).

It belongs to the glutamate--cysteine ligase type 2 family. YbdK subfamily.

It catalyses the reaction L-cysteine + L-glutamate + ATP = gamma-L-glutamyl-L-cysteine + ADP + phosphate + H(+). ATP-dependent carboxylate-amine ligase which exhibits weak glutamate--cysteine ligase activity. The protein is Putative glutamate--cysteine ligase 2 of Pseudomonas paraeruginosa (strain DSM 24068 / PA7) (Pseudomonas aeruginosa (strain PA7)).